A 423-amino-acid polypeptide reads, in one-letter code: G protein-activated inward rectifier potassium channel 2 (423 aa).

The Cytoplasmic segment spans residues 1 to 89 (MAKLTESMTN…IFTTLVDLKW (89 aa)). Phosphoserine is present on residues Ser16 and Ser23. The helical transmembrane segment at 90–114 (RFNLLIFVMVYTVTWLFFGMIWWLI) threads the bilayer. Over 115–138 (AYIRGDMDHIEDPSWTPCVTNLNG) the chain is Extracellular. The segment at residues 139 to 150 (FVSAFLFSIETE) is an intramembrane region (helical; Pore-forming). The pore-forming intramembrane region spans 151 to 157 (TTIGYGY). Positions 152-157 (TIGYGY) match the Selectivity filter motif. The Extracellular segment spans residues 158–166 (RVITDKCPE). Residues 167-188 (GIILLLIQSVLGSIVNAFMVGC) form a helical membrane-spanning segment. At 189 to 423 (MFVKISQPKK…VANLENESKV (235 aa)) the chain is on the cytoplasmic side. The disordered stretch occupies residues 390 to 423 (NQHAELETEEEEKNLEEQTERNGDVANLENESKV). Residues 420 to 423 (ESKV) carry the PDZ-binding motif.

It belongs to the inward rectifier-type potassium channel (TC 1.A.2.1) family. KCNJ6 subfamily. In terms of assembly, associates with KCNJ3/GIRK1 or KCNJ5/GRIK4 to form a G-protein-activated heteromultimer pore-forming unit. The resulting inward current is much larger. Interacts (via PDZ-binding motif) with SNX27 (via PDZ domain); the interaction is required when endocytosed to prevent degradation in lysosomes and promote recycling to the plasma membrane.

The protein resides in the membrane. It carries out the reaction K(+)(in) = K(+)(out). Activated by phosphatidylinositol 4,5 biphosphate (PtdIns(4,5)P2). Functionally, inward rectifier potassium channels are characterized by a greater tendency to allow potassium to flow into the cell rather than out of it. Their voltage dependence is regulated by the concentration of extracellular potassium; as external potassium is raised, the voltage range of the channel opening shifts to more positive voltages. The inward rectification is mainly due to the blockage of outward current by internal magnesium. This potassium channel may be involved in the regulation of insulin secretion by glucose and/or neurotransmitters acting through G-protein-coupled receptors. The chain is G protein-activated inward rectifier potassium channel 2 (KCNJ6) from Pongo abelii (Sumatran orangutan).